The sequence spans 422 residues: Serine--tRNA ligase (422 aa).

231 to 233 (TSE) serves as a coordination point for L-serine. ATP is bound at residue 262 to 264 (RQE). L-serine is bound at residue glutamate 285. 349 to 352 (EISS) contacts ATP. Residue serine 384 coordinates L-serine.

This sequence belongs to the class-II aminoacyl-tRNA synthetase family. Type-1 seryl-tRNA synthetase subfamily. Homodimer. The tRNA molecule binds across the dimer.

It localises to the cytoplasm. The catalysed reaction is tRNA(Ser) + L-serine + ATP = L-seryl-tRNA(Ser) + AMP + diphosphate + H(+). It carries out the reaction tRNA(Sec) + L-serine + ATP = L-seryl-tRNA(Sec) + AMP + diphosphate + H(+). The protein operates within aminoacyl-tRNA biosynthesis; selenocysteinyl-tRNA(Sec) biosynthesis; L-seryl-tRNA(Sec) from L-serine and tRNA(Sec): step 1/1. Functionally, catalyzes the attachment of serine to tRNA(Ser). Is also able to aminoacylate tRNA(Sec) with serine, to form the misacylated tRNA L-seryl-tRNA(Sec), which will be further converted into selenocysteinyl-tRNA(Sec). The protein is Serine--tRNA ligase of Mycoplasma capricolum subsp. capricolum (strain California kid / ATCC 27343 / NCTC 10154).